A 414-amino-acid chain; its full sequence is Nuclear localization sequence-binding protein (414 aa).

Disordered stretches follow at residues 1-172 (MAKT…TIFV), 244-264 (STSKPAGNNDRAKKFGDTPSE), and 336-414 (RPVR…KTFD). Residues 10-26 (NKKEVKASKQAKEEKAK) show a composition bias toward basic and acidic residues. 2 stretches are compositionally biased toward low complexity: residues 27–44 (AVSSSSSESSSSSSSSSE) and 54–73 (ESSSSSSSSDSESSSSSSSD). A compositionally biased stretch (basic and acidic residues) spans 78-87 (AETKKEESKD). Residues S93, S95, S96, S97, S116, S127, S129, S131, and S143 each carry the phosphoserine modification. The span at 96–105 (SSDEEEEEEK) shows a compositional bias: acidic residues. The span at 106–117 (EETKKEESKESS) shows a compositional bias: basic and acidic residues. Residues 118–128 (SSDSSSSSSSD) are compositionally biased toward low complexity. Basic and acidic residues predominate over residues 134–144 (EESNDKKRKSE). 2 consecutive RRM domains span residues 168–246 (ATIF…MSTS) and 267–345 (DTLF…FSSP). Over residues 351-386 (GGRGGSRGFGGRGGGRGGNRGFGGRGGARGGRGGFR) the composition is skewed to gly residues. Residue R353 is modified to Omega-N-methylarginine. The RGG-box stretch occupies residues 353–384 (RGGSRGFGGRGGGRGGNRGFGGRGGARGGRGG). Asymmetric dimethylarginine; by HMT1; alternate is present on residues R357, R362, and R366. Residues R357, R362, and R366 each carry the omega-N-methylarginine; by HMT1; alternate modification. Residues 366-384 (RGGNRGFGGRGGARGGRGG) are RNA-binding RGG-box. Omega-N-methylarginine is present on R370. Asymmetric dimethylarginine; by HMT1; alternate is present on residues R375, R379, and R382. An omega-N-methylarginine; by HMT1; alternate mark is found at R375, R379, and R382. Omega-N-methylarginine is present on R386.

Belongs to the RRM GAR family. Post-translationally, methylated by HMT1, forming asymmetric dimethylarginines (DMA) within a domain referred to as an RGG box, made up of repeated Gly-Gly dipeptides interspersed with Arg and aromatic residues. In terms of processing, pyrophosphorylated by 5-diphosphoinositol pentakisphosphate (5-IP7). Serine pyrophosphorylation is achieved by Mg(2+)-dependent, but enzyme independent transfer of a beta-phosphate from a inositol pyrophosphate to a pre-phosphorylated serine residue.

It is found in the nucleus. Its subcellular location is the nucleolus. Its function is as follows. Involved in pre-rRNA processing. Specifically binds nuclear localization sequences. Candidate for a receptor at the nucleus that may be involved in both RNA and protein transport. Binds telomeric sequences of the type (TG[1-3])n in vitro. This is Nuclear localization sequence-binding protein from Saccharomyces cerevisiae (strain ATCC 204508 / S288c) (Baker's yeast).